A 643-amino-acid polypeptide reads, in one-letter code: Phosphomethylpyrimidine synthase (643 aa).

Residues Asn-248, Met-277, Tyr-306, His-342, 362–364, 403–406, and Glu-442 each bind substrate; these read SRG and DGLR. A Zn(2+)-binding site is contributed by His-446. Tyr-469 is a binding site for substrate. His-510 lines the Zn(2+) pocket. [4Fe-4S] cluster contacts are provided by Cys-590, Cys-593, and Cys-598.

This sequence belongs to the ThiC family. Homodimer. The cofactor is [4Fe-4S] cluster.

The catalysed reaction is 5-amino-1-(5-phospho-beta-D-ribosyl)imidazole + S-adenosyl-L-methionine = 4-amino-2-methyl-5-(phosphooxymethyl)pyrimidine + CO + 5'-deoxyadenosine + formate + L-methionine + 3 H(+). It participates in cofactor biosynthesis; thiamine diphosphate biosynthesis. Its function is as follows. Catalyzes the synthesis of the hydroxymethylpyrimidine phosphate (HMP-P) moiety of thiamine from aminoimidazole ribotide (AIR) in a radical S-adenosyl-L-methionine (SAM)-dependent reaction. The polypeptide is Phosphomethylpyrimidine synthase (Burkholderia cenocepacia (strain ATCC BAA-245 / DSM 16553 / LMG 16656 / NCTC 13227 / J2315 / CF5610) (Burkholderia cepacia (strain J2315))).